We begin with the raw amino-acid sequence, 100 residues long: Cystatin-B (100 aa).

The region spanning Gly6–Gln88 is the Cystatin domain. Positions Gln48–Gly52 match the Secondary area of contact motif.

Belongs to the cystatin family. Widely expressed. Highly expressed in liver and to a lesser extent in spleen, gill, brain, intestine, kidney, head kidney and blood. Lowest level in muscle.

It localises to the cytoplasm. In terms of biological role, thiol protease inhibitor. Has papain inhibitory activity in vitro. May be involved in immune responses against invading Gram-negative bacteria. The polypeptide is Cystatin-B (Oplegnathus fasciatus (Barred knifejaw)).